The following is a 176-amino-acid chain: ATP-dependent protease subunit HslV (176 aa).

Residue Thr5 is part of the active site. Na(+)-binding residues include Ala161, Cys164, and Thr167.

The protein belongs to the peptidase T1B family. HslV subfamily. In terms of assembly, a double ring-shaped homohexamer of HslV is capped on each side by a ring-shaped HslU homohexamer. The assembly of the HslU/HslV complex is dependent on binding of ATP.

Its subcellular location is the cytoplasm. It carries out the reaction ATP-dependent cleavage of peptide bonds with broad specificity.. Allosterically activated by HslU binding. Functionally, protease subunit of a proteasome-like degradation complex believed to be a general protein degrading machinery. The chain is ATP-dependent protease subunit HslV from Caldicellulosiruptor bescii (strain ATCC BAA-1888 / DSM 6725 / KCTC 15123 / Z-1320) (Anaerocellum thermophilum).